The following is a 305-amino-acid chain: MGDFIGHISPGLFLVFYGLYQAIIVSRALILNDSLLYPSYLSKNKGKWARLWQIAHAGWLKVVSGSLLIVYELNCVDEGLTFMTKMIPPRFMYPKEWQHLTMFILLTLDGCVEVVSRSVLRQRLVLLERGATVLGVYVLLLLLVSHVKDSSGVELQVHSLLILVVFLLMLVLTAELWAPEMVHLWVIETFLFLTMGSWLMQAAFILFRPVSGFPWEDDDISNIMLVTTFFCWHVMINALCMLGIYGISSFWHRCYRTGLMPMGSKEVLYHKSSEGTFYKLLQKAEQQDRDDQAPLLSKSSPCDRA.

A helical membrane pass occupies residues 4–24; that stretch reads FIGHISPGLFLVFYGLYQAII. Residue Asn-32 is glycosylated (N-linked (GlcNAc...) asparagine). 6 consecutive transmembrane segments (helical) span residues 51 to 71, 100 to 120, 124 to 144, 159 to 179, 187 to 207, and 223 to 243; these read LWQI…LIVY, LTMF…RSVL, LVLL…LLLV, SLLI…LWAP, IETF…FILF, and IMLV…CMLG. A disordered region spans residues 285–305; the sequence is EQQDRDDQAPLLSKSSPCDRA.

This sequence belongs to the TMEM45 family.

The protein resides in the membrane. This is Transmembrane epididymal protein 1 (Teddm1) from Rattus norvegicus (Rat).